We begin with the raw amino-acid sequence, 341 residues long: tRNA N6-adenosine threonylcarbamoyltransferase (341 aa).

2 residues coordinate Fe cation: histidine 111 and histidine 115. Substrate-binding positions include 134–138, aspartate 167, glycine 180, and asparagine 270; that span reads LVSGG. Residue aspartate 298 coordinates Fe cation.

It belongs to the KAE1 / TsaD family. The cofactor is Fe(2+).

Its subcellular location is the cytoplasm. The catalysed reaction is L-threonylcarbamoyladenylate + adenosine(37) in tRNA = N(6)-L-threonylcarbamoyladenosine(37) in tRNA + AMP + H(+). Required for the formation of a threonylcarbamoyl group on adenosine at position 37 (t(6)A37) in tRNAs that read codons beginning with adenine. Is involved in the transfer of the threonylcarbamoyl moiety of threonylcarbamoyl-AMP (TC-AMP) to the N6 group of A37, together with TsaE and TsaB. TsaD likely plays a direct catalytic role in this reaction. In Thiobacillus denitrificans (strain ATCC 25259 / T1), this protein is tRNA N6-adenosine threonylcarbamoyltransferase.